An 842-amino-acid chain; its full sequence is Elongation factor 2 (842 aa).

Residues 17–253 (TNVRNMSVIA…LWGDSYFNPK (237 aa)) form the tr-type G domain. GTP-binding positions include 26 to 33 (AHVDHGKS), 158 to 161 (NKVD), and 213 to 215 (SGL). His-699 carries the post-translational modification Diphthamide.

This sequence belongs to the TRAFAC class translation factor GTPase superfamily. Classic translation factor GTPase family. EF-G/EF-2 subfamily.

The protein resides in the cytoplasm. It carries out the reaction GTP + H2O = GDP + phosphate + H(+). Catalyzes the GTP-dependent ribosomal translocation step during translation elongation. During this step, the ribosome changes from the pre-translocational (PRE) to the post-translocational (POST) state as the newly formed A-site-bound peptidyl-tRNA and P-site-bound deacylated tRNA move to the P and E sites, respectively. Catalyzes the coordinated movement of the two tRNA molecules, the mRNA and conformational changes in the ribosome. The sequence is that of Elongation factor 2 (EFT1) from Kluyveromyces lactis (strain ATCC 8585 / CBS 2359 / DSM 70799 / NBRC 1267 / NRRL Y-1140 / WM37) (Yeast).